The primary structure comprises 206 residues: Crossover junction endodeoxyribonuclease RuvC (206 aa).

Catalysis depends on residues aspartate 7, glutamate 67, and aspartate 138. Positions 7, 67, and 138 each coordinate Mg(2+).

Belongs to the RuvC family. Homodimer which binds Holliday junction (HJ) DNA. The HJ becomes 2-fold symmetrical on binding to RuvC with unstacked arms; it has a different conformation from HJ DNA in complex with RuvA. In the full resolvosome a probable DNA-RuvA(4)-RuvB(12)-RuvC(2) complex forms which resolves the HJ. Mg(2+) is required as a cofactor.

The protein localises to the cytoplasm. It carries out the reaction Endonucleolytic cleavage at a junction such as a reciprocal single-stranded crossover between two homologous DNA duplexes (Holliday junction).. The RuvA-RuvB-RuvC complex processes Holliday junction (HJ) DNA during genetic recombination and DNA repair. Endonuclease that resolves HJ intermediates. Cleaves cruciform DNA by making single-stranded nicks across the HJ at symmetrical positions within the homologous arms, yielding a 5'-phosphate and a 3'-hydroxyl group; requires a central core of homology in the junction. The consensus cleavage sequence is 5'-(A/T)TT(C/G)-3'. Cleavage occurs on the 3'-side of the TT dinucleotide at the point of strand exchange. HJ branch migration catalyzed by RuvA-RuvB allows RuvC to scan DNA until it finds its consensus sequence, where it cleaves and resolves the cruciform DNA. In Anaeromyxobacter sp. (strain Fw109-5), this protein is Crossover junction endodeoxyribonuclease RuvC.